Reading from the N-terminus, the 339-residue chain is UDP-glucose 4-epimerase (339 aa).

NAD(+) contacts are provided by residues 12 to 13 (FI), 32 to 37 (DNLCNS), 59 to 60 (DI), 81 to 85 (FAGLK), Asn100, Ser125, Tyr150, Lys154, and Phe179. Substrate is bound by residues Ser125 and Tyr150. Tyr150 acts as the Proton acceptor in catalysis. Substrate-binding positions include Asn180, 200-201 (NL), 217-219 (AVF), Arg232, and 293-296 (RAGD).

This sequence belongs to the NAD(P)-dependent epimerase/dehydratase family. Homodimer. NAD(+) is required as a cofactor.

The catalysed reaction is UDP-alpha-D-glucose = UDP-alpha-D-galactose. Its pathway is carbohydrate metabolism; galactose metabolism. In terms of biological role, involved in the metabolism of galactose. Plays an essential role in the incorporation of galactose into meningococcal lipopolysaccharide surface molecules, which are important for pathogenesis. Catalyzes the conversion of UDP-galactose (UDP-Gal) to UDP-glucose (UDP-Glc) through a mechanism involving the transient reduction of NAD. This chain is UDP-glucose 4-epimerase (galE), found in Neisseria meningitidis serogroup B (strain ATCC BAA-335 / MC58).